A 155-amino-acid chain; its full sequence is 6,7-dimethyl-8-ribityllumazine synthase (155 aa).

5-amino-6-(D-ribitylamino)uracil is bound by residues F24, 58 to 60, and 82 to 84; these read AFE and VII. 87 to 88 is a binding site for (2S)-2-hydroxy-3-oxobutyl phosphate; sequence ST. Catalysis depends on H90, which acts as the Proton donor. F115 contacts 5-amino-6-(D-ribitylamino)uracil. Residue R129 participates in (2S)-2-hydroxy-3-oxobutyl phosphate binding.

It belongs to the DMRL synthase family.

The enzyme catalyses (2S)-2-hydroxy-3-oxobutyl phosphate + 5-amino-6-(D-ribitylamino)uracil = 6,7-dimethyl-8-(1-D-ribityl)lumazine + phosphate + 2 H2O + H(+). The protein operates within cofactor biosynthesis; riboflavin biosynthesis; riboflavin from 2-hydroxy-3-oxobutyl phosphate and 5-amino-6-(D-ribitylamino)uracil: step 1/2. Catalyzes the formation of 6,7-dimethyl-8-ribityllumazine by condensation of 5-amino-6-(D-ribitylamino)uracil with 3,4-dihydroxy-2-butanone 4-phosphate. This is the penultimate step in the biosynthesis of riboflavin. The chain is 6,7-dimethyl-8-ribityllumazine synthase from Chlorobium phaeobacteroides (strain DSM 266 / SMG 266 / 2430).